Reading from the N-terminus, the 377-residue chain is tRNA(Met) cytidine acetate ligase (377 aa).

Residues 7–20 (ITEY…HLYH), Gly101, Asn152, and Arg179 contribute to the ATP site.

This sequence belongs to the TmcAL family.

The protein localises to the cytoplasm. The enzyme catalyses cytidine(34) in elongator tRNA(Met) + acetate + ATP = N(4)-acetylcytidine(34) in elongator tRNA(Met) + AMP + diphosphate. In terms of biological role, catalyzes the formation of N(4)-acetylcytidine (ac(4)C) at the wobble position of elongator tRNA(Met), using acetate and ATP as substrates. First activates an acetate ion to form acetyladenylate (Ac-AMP) and then transfers the acetyl group to tRNA to form ac(4)C34. This Oenococcus oeni (strain ATCC BAA-331 / PSU-1) protein is tRNA(Met) cytidine acetate ligase.